The following is a 375-amino-acid chain: Metal tolerance protein B (375 aa).

Residues 1 to 57 lie on the Cytoplasmic side of the membrane; it reads MELEQICILKPDDEEEMESPSPSKTEENLGVVPLSCAFTRQEHCVSETKEREESTRR. The helical transmembrane segment at 58-78 threads the bilayer; it reads LSSLIFLYLIVMSVQIVGGFK. Over 79-84 the chain is Vacuolar; it reads ANSLAV. Residues 85-105 traverse the membrane as a helical segment; the sequence is MTDAAHLLSDVAGLCVSLLAI. Residues 106–122 lie on the Cytoplasmic side of the membrane; it reads KVSSWEANPRNSFGFKR. Residues 123-143 form a helical membrane-spanning segment; that stretch reads LEVLAAFLSVQLIWLVSGVII. The Vacuolar portion of the chain corresponds to 144-160; sequence HEAIQRLLSRSREVNGE. The chain crosses the membrane as a helical span at residues 161 to 181; that stretch reads IMFGISAFGFFMNLVMVLWLG. The segment at 182–206 is required for zinc-binding; the sequence is HNHSHHHHDHHHHHHNHKHQHQHHH. Residues 182 to 240 lie on the Cytoplasmic side of the membrane; it reads HNHSHHHHDHHHHHHNHKHQHQHHHKEVVAEEEEEEMNPLKGEKSSSKEMNINIQGAYL. The helical transmembrane segment at 241–261 threads the bilayer; that stretch reads HAMADMIQSLGVMIGGGIIWV. Topologically, residues 262–264 are vacuolar; that stretch reads KPK. A helical membrane pass occupies residues 265–285; sequence WVLVDLICTLVFSAFALAATL. The Cytoplasmic segment spans residues 286–375; it reads PILKNIFGIL…YHATVQVESE (90 aa).

The protein belongs to the cation diffusion facilitator (CDF) transporter (TC 2.A.4) family. SLC30A subfamily.

It localises to the vacuole membrane. In terms of biological role, involved in sequestration of excess zinc in the cytoplasm into vacuoles to maintain zinc homeostasis. The polypeptide is Metal tolerance protein B (MTPB) (Arabidopsis thaliana (Mouse-ear cress)).